The primary structure comprises 288 residues: Pantothenate synthetase (288 aa).

ATP is bound at residue 30 to 37 (MGALHEGH). H37 acts as the Proton donor in catalysis. Q61 is a binding site for (R)-pantoate. Q61 contacts beta-alanine. 147-150 (GEKD) lines the ATP pocket. Residue Q153 coordinates (R)-pantoate. ATP contacts are provided by residues L176 and 184 to 187 (ISSR).

The protein belongs to the pantothenate synthetase family. Homodimer.

The protein resides in the cytoplasm. The catalysed reaction is (R)-pantoate + beta-alanine + ATP = (R)-pantothenate + AMP + diphosphate + H(+). Its pathway is cofactor biosynthesis; (R)-pantothenate biosynthesis; (R)-pantothenate from (R)-pantoate and beta-alanine: step 1/1. In terms of biological role, catalyzes the condensation of pantoate with beta-alanine in an ATP-dependent reaction via a pantoyl-adenylate intermediate. The protein is Pantothenate synthetase of Prosthecochloris aestuarii (strain DSM 271 / SK 413).